Reading from the N-terminus, the 864-residue chain is Mitochondrial 15S rRNA processing factor CCM1 (864 aa).

Residues 1-76 (MYMARCGPKN…REFSNTLKER (76 aa)) constitute a mitochondrion transit peptide. PPR repeat units lie at residues 319–353 (NKQNLTTVIQFYSRKEMTKQAWNTFDTMKFLSTKH) and 356–390 (DICTYNTMLRICEKERNFPKALDLFQEIQDHNIKP).

The protein belongs to the CCM1 family. Binds to mitochondrial small subunit 15S rRNA.

It is found in the mitochondrion. Functionally, regulates mitochondrial small subunit maturation by controlling 15S rRNA 5'-end processing. Localizes to the 5' precursor of the 15S rRNA in a position that is subsequently occupied by mS47 in the mature yeast mtSSU. Uses structure and sequence-specific RNA recognition, binding to a single-stranded region of the precursor and specifically recognizing bases -6 to -1. The exchange of Ccm1 for mS47 is coupled to the irreversible removal of precursor rRNA that is accompanied by conformational changes of the mitoribosomal proteins uS5m and mS26. These conformational changes signal completion of 5'-end rRNA processing through protection of the mature 5'-end of the 15S rRNA and stabilization of mS47. The removal of the 5' precursor together with the dissociation of Ccm1 may be catalyzed by the 5'-3' exoribonuclease Pet127. Involved in the specific removal of group I introns in mitochondrial encoded transcripts. In Saccharomyces cerevisiae (strain RM11-1a) (Baker's yeast), this protein is Mitochondrial 15S rRNA processing factor CCM1 (CCM1).